Here is a 104-residue protein sequence, read N- to C-terminus: Protein E7 (104 aa).

The tract at residues 1-47 (MHGNIINIEDVILDLVPQPEIDLRCYEQLDYEQFDSSDEDETDNMRD) is E7 terminal domain. The short motif at 23 to 27 (LRCYE) is the LXCXE motif; interaction with host RB1 and TMEM173/STING element. The segment at 65-101 (CCMCNSIVQLAVQSSRQNVRVLEQMLMEDVSLVCHQC) is a zinc-finger region. The Nuclear export signal signature appears at 83–91 (VRVLEQMLM).

It belongs to the papillomaviridae E7 protein family. Homodimer. Homooligomer. Interacts with host RB1; this interaction induces dissociation of RB1-E2F1 complex thereby disrupting RB1 activity. Interacts with host EP300; this interaction represses EP300 transcriptional activity. Interacts with protein E2; this interaction inhibits E7 oncogenic activity. Interacts with host TMEM173/STING; this interaction impairs the ability of TMEM173/STING to sense cytosolic DNA and promote the production of type I interferon (IFN-alpha and IFN-beta). Post-translationally, highly phosphorylated.

Its subcellular location is the host cytoplasm. It localises to the host nucleus. Functionally, plays a role in viral genome replication by driving entry of quiescent cells into the cell cycle. Stimulation of progression from G1 to S phase allows the virus to efficiently use the cellular DNA replicating machinery to achieve viral genome replication. E7 protein has both transforming and trans-activating activities. Induces the disassembly of the E2F1 transcription factor from RB1, with subsequent transcriptional activation of E2F1-regulated S-phase genes. Interferes with host histone deacetylation mediated by HDAC1 and HDAC2, leading to transcription activation. Also plays a role in the inhibition of both antiviral and antiproliferative functions of host interferon alpha. Interaction with host TMEM173/STING impairs the ability of TMEM173/STING to sense cytosolic DNA and promote the production of type I interferon (IFN-alpha and IFN-beta). The protein is Protein E7 of Human papillomavirus type 26.